The following is a 274-amino-acid chain: Nitrogenase iron protein (274 aa).

Residue 8–15 (GKGGIGKS) participates in ATP binding. Cys-94 contributes to the [4Fe-4S] cluster binding site. The residue at position 97 (Arg-97) is an ADP-ribosylarginine; by dinitrogenase reductase ADP-ribosyltransferase. [4Fe-4S] cluster is bound at residue Cys-131.

Belongs to the NifH/BchL/ChlL family. In terms of assembly, homodimer. The cofactor is [4Fe-4S] cluster. Post-translationally, the reversible ADP-ribosylation of Arg-97 inactivates the nitrogenase reductase and regulates nitrogenase activity.

It catalyses the reaction N2 + 8 reduced [2Fe-2S]-[ferredoxin] + 16 ATP + 16 H2O = H2 + 8 oxidized [2Fe-2S]-[ferredoxin] + 2 NH4(+) + 16 ADP + 16 phosphate + 6 H(+). Functionally, the key enzymatic reactions in nitrogen fixation are catalyzed by the nitrogenase complex, which has 2 components: the iron protein and the molybdenum-iron protein. The chain is Nitrogenase iron protein from Dehalococcoides mccartyi (strain ATCC BAA-2266 / KCTC 15142 / 195) (Dehalococcoides ethenogenes (strain 195)).